Consider the following 859-residue polypeptide: Leucine--tRNA ligase (859 aa).

The 'HIGH' region motif lies at 42 to 52; it reads PYPSGRLHMGH. Positions 618–622 match the 'KMSKS' region motif; that stretch reads KMSKS. K621 lines the ATP pocket.

Belongs to the class-I aminoacyl-tRNA synthetase family.

It localises to the cytoplasm. The enzyme catalyses tRNA(Leu) + L-leucine + ATP = L-leucyl-tRNA(Leu) + AMP + diphosphate. This chain is Leucine--tRNA ligase, found in Shewanella oneidensis (strain ATCC 700550 / JCM 31522 / CIP 106686 / LMG 19005 / NCIMB 14063 / MR-1).